A 127-amino-acid polypeptide reads, in one-letter code: Fluoride-specific ion channel FluC (127 aa).

The next 4 helical transmembrane spans lie at 7 to 27, 38 to 58, 70 to 90, and 102 to 122; these read VYVALGGALGAVSRYLIVAWV, GTLAVNLLGSFLLGTAFVYVV, LIMVGFLGALTTFSTFSLEAW, and LAYILMSVILCLFAVSAGIAL. Gly-77 and Thr-80 together coordinate Na(+).

Belongs to the fluoride channel Fluc/FEX (TC 1.A.43) family.

The protein resides in the cell inner membrane. The enzyme catalyses fluoride(in) = fluoride(out). Its activity is regulated as follows. Na(+) is not transported, but it plays an essential structural role and its presence is essential for fluoride channel function. Fluoride-specific ion channel. Important for reducing fluoride concentration in the cell, thus reducing its toxicity. The polypeptide is Fluoride-specific ion channel FluC (Hahella chejuensis (strain KCTC 2396)).